We begin with the raw amino-acid sequence, 49 residues long: Protein 19.5 (49 aa).

Positions 1–23 (MFRLLLNLLRHRVTYRFLVVLCA) are cleaved as a signal peptide.

This is Protein 19.5 from Escherichia phage T7 (Bacteriophage T7).